The primary structure comprises 811 residues: MALPLSTCLLFHPKESRSRRFCFSPASAASLKSGLHSATSAKIASMPTCFEQTRGRIAKLFHKDELSVSTYDTAWVAMVPSPTSLEEPCFPDCLNWLLENQCHDGSWARPHHHPLLKKDVLSSTLACILALKKWGVGEEQIKRGLHFLELNFASATDKCQITPMGFDIIFPAMLDYARGFSLNLRLDPTTFNDLMHKRDLELKRSNRNYSSETETYWAYIAEGMGELQNWESVMKYQRRNGSLFNCPSTTAAAFIALRNSDCLNYLHLALKKFGNAVSAVYPLDIYSQLCTVDNLERLGISQYFSTEIQNVLDETYRCWMQGNEEIFMDASTCALAFRTLRLNGYDVTSDPVTKILQECFSSSFRGNMTDINTTLELYRASELVLYPDERDLEKQNLRLKLLLEQELSSGLIQSCQLGRSINVLLISQVNQAIEYPFYAIMDRVAKRKSIEIYNFDNTRILKTSYCSPNFGNEDFHFLSIEDFNRCQAAHREELGELERWVVENRLDELKFARSKSAYCYFSAAATFFAPELLDARLSWAKNGVLTTVIDDFFDVGGSVEELKNLIQLVELWDVDICTECYSHNVQIIFSALRRTICEIGDKAFKLQGRCITNHIIAIWLDLLNSMMRETEWARDNFVPTIDEYMSNAHVSFALGPIVLPALYLVGPKLSEDMVNHSEYHNLFKLMSTCGRLLNDIHGYERELKDGKLNALSLYIINHGGEVSKEAAIWEMKSWIETQRRELLRLVLEGKKSVLPKPCRELFWHMCSVVHLFYSKGDGFTSQDLIQLVNTIIHQPILLNDQTGAGLSKLHD.

The transit peptide at 1 to 49 (MALPLSTCLLFHPKESRSRRFCFSPASAASLKSGLHSATSAKIASMPTC) directs the protein to the chloroplast. Mg(2+) is bound by residues Asp550, Asp554, Asn694, and Glu702. Residues 550–554 (DDFFD) carry the DDXXD motif motif.

Belongs to the terpene synthase family. Mg(2+) is required as a cofactor.

The protein localises to the plastid. Its subcellular location is the chloroplast. It carries out the reaction ent-8alpha-hydroxylabd-13-en-15-yl diphosphate = ent-13-epi-manoyl oxide + diphosphate. It functions in the pathway secondary metabolite biosynthesis; terpenoid biosynthesis. Its function is as follows. Involved in diterpenoid biosynthesis. Catalyzes the conversion of ent-8alpha-hydroxylabd-13-en-15-yl diphosphate to ent-13-epi-manoyl oxide. In Salvia miltiorrhiza (Chinese sage), this protein is Ent-13-epi-manoyl oxide synthase KSL2, chloroplastic.